Consider the following 384-residue polypeptide: S-adenosylmethionine synthase (384 aa).

Residue histidine 15 coordinates ATP. A Mg(2+)-binding site is contributed by aspartate 17. Glutamate 43 provides a ligand contact to K(+). Residues glutamate 56 and glutamine 99 each contribute to the L-methionine site. Residues glutamine 99 to arginine 109 form a flexible loop region. ATP-binding positions include aspartate 164–lysine 166, arginine 230–phenylalanine 231, aspartate 239, arginine 245–lysine 246, alanine 262, and lysine 266. Residue aspartate 239 coordinates L-methionine. Lysine 270 contributes to the L-methionine binding site.

This sequence belongs to the AdoMet synthase family. As to quaternary structure, homotetramer; dimer of dimers. Mg(2+) serves as cofactor. K(+) is required as a cofactor.

The protein resides in the cytoplasm. It catalyses the reaction L-methionine + ATP + H2O = S-adenosyl-L-methionine + phosphate + diphosphate. It participates in amino-acid biosynthesis; S-adenosyl-L-methionine biosynthesis; S-adenosyl-L-methionine from L-methionine: step 1/1. In terms of biological role, catalyzes the formation of S-adenosylmethionine (AdoMet) from methionine and ATP. The overall synthetic reaction is composed of two sequential steps, AdoMet formation and the subsequent tripolyphosphate hydrolysis which occurs prior to release of AdoMet from the enzyme. This Salmonella arizonae (strain ATCC BAA-731 / CDC346-86 / RSK2980) protein is S-adenosylmethionine synthase.